A 36-amino-acid chain; its full sequence is Photosystem I reaction center subunit VIII (36 aa).

A helical transmembrane segment spans residues 8–28 (SLFVPLVGLVFPAIAMASLFL).

This sequence belongs to the PsaI family.

It is found in the plastid. The protein localises to the chloroplast thylakoid membrane. May help in the organization of the PsaL subunit. This Brassica oleracea (Wild cabbage) protein is Photosystem I reaction center subunit VIII.